Here is an 854-residue protein sequence, read N- to C-terminus: Iron and copper transporter IacT (854 aa).

The TonB box motif lies at 187–194 (IELIVTAQ). A TBDR plug domain is found at 199 to 315 (DAQDVPLSLT…PAGVVNVISR (117 aa)). The region spanning 320–854 (QPEMRISALY…TYGVRVSASF (535 aa)) is the TBDR beta-barrel domain. The short motif at 839 to 854 (GFGDPVTYGVRVSASF) is the TonB C-terminal box element.

The protein belongs to the TonB-dependent receptor family.

It is found in the cell outer membrane. In terms of biological role, involved in the TonB-dependent uptake of copper and iron under conditions in which the concentration of copper exceeds that of the iron. This Nostoc sp. (strain PCC 7120 / SAG 25.82 / UTEX 2576) protein is Iron and copper transporter IacT.